The sequence spans 192 residues: MAPKPGAEWSTALSHLVLGVVSLHAAVSTAEASRGAAAGFLLQVLAATTTLAPGLSTHEDCLAGAWVATVIGLPLLAFDFHWVNGDRSSANLLLGGGMVLAVAGGHLGPEGRSVAGQAMLLVVAVTILIVAVFTANTYGMWGGAMLGVAGLLSRLEEDRLLLLPKEDVCRWALAVGSWAYCRALHTQRLQWE.

The signal sequence occupies residues 1-32 (MAPKPGAEWSTALSHLVLGVVSLHAAVSTAEA). The next 4 helical transmembrane spans lie at 35–55 (GAAAGFLLQVLAATTTLAPGL), 63–83 (AGAWVATVIGLPLLAFDFHWV), 89–109 (SANLLLGGGMVLAVAGGHLGP), and 114–134 (VAGQAMLLVVAVTILIVAVFT).

The protein resides in the membrane. This chain is Transmembrane protein 276, found in Homo sapiens (Human).